A 156-amino-acid polypeptide reads, in one-letter code: Large ribosomal subunit protein uL15 (156 aa).

Residues 1–11 (MKLNDLRDKPG) are compositionally biased toward basic and acidic residues. The interval 1–40 (MKLNDLRDKPGSVKARKRVGRGIGSGTGKTGGRGVKGQKS) is disordered. A compositionally biased stretch (gly residues) spans 21-35 (RGIGSGTGKTGGRGV).

It belongs to the universal ribosomal protein uL15 family. In terms of assembly, part of the 50S ribosomal subunit.

Binds to the 23S rRNA. The sequence is that of Large ribosomal subunit protein uL15 from Brucella anthropi (strain ATCC 49188 / DSM 6882 / CCUG 24695 / JCM 21032 / LMG 3331 / NBRC 15819 / NCTC 12168 / Alc 37) (Ochrobactrum anthropi).